Here is a 281-residue protein sequence, read N- to C-terminus: NADPH-dependent 7-cyano-7-deazaguanine reductase (281 aa).

Substrate is bound at residue 88 to 90 (VES). 90–91 (SK) serves as a coordination point for NADPH. The active-site Thioimide intermediate is C189. The Proton donor role is filled by D196. Residue 228–229 (HE) participates in substrate binding. 257–258 (RG) contributes to the NADPH binding site.

Belongs to the GTP cyclohydrolase I family. QueF type 2 subfamily. As to quaternary structure, homodimer.

Its subcellular location is the cytoplasm. The enzyme catalyses 7-aminomethyl-7-carbaguanine + 2 NADP(+) = 7-cyano-7-deazaguanine + 2 NADPH + 3 H(+). Its pathway is tRNA modification; tRNA-queuosine biosynthesis. Catalyzes the NADPH-dependent reduction of 7-cyano-7-deazaguanine (preQ0) to 7-aminomethyl-7-deazaguanine (preQ1). This Cronobacter sakazakii (strain ATCC BAA-894) (Enterobacter sakazakii) protein is NADPH-dependent 7-cyano-7-deazaguanine reductase.